The primary structure comprises 179 residues: ATP-dependent protease subunit HslV (179 aa).

Thr-7 is an active-site residue. Positions 162, 165, and 168 each coordinate Na(+).

The protein belongs to the peptidase T1B family. HslV subfamily. In terms of assembly, a double ring-shaped homohexamer of HslV is capped on each side by a ring-shaped HslU homohexamer. The assembly of the HslU/HslV complex is dependent on binding of ATP.

The protein resides in the cytoplasm. The catalysed reaction is ATP-dependent cleavage of peptide bonds with broad specificity.. With respect to regulation, allosterically activated by HslU binding. Functionally, protease subunit of a proteasome-like degradation complex believed to be a general protein degrading machinery. The sequence is that of ATP-dependent protease subunit HslV from Aromatoleum aromaticum (strain DSM 19018 / LMG 30748 / EbN1) (Azoarcus sp. (strain EbN1)).